A 3132-amino-acid polypeptide reads, in one-letter code: MSLHTPSDGQQDPALASKTLCEQISRALGLGQDKIENIFPGTPFQRDVIDCAADDKQRAVGHAVFEIPKDIDAARLAAAWKETVLHTPALRTCTFTSKSGDVLQVVLRDSFVFSWMSGPSVDLKEAVVQDEAAAALAGPRCNRFVLLEDPDTKERQLIWTFSHALVDSTFQERILRRVLKAYKDANDEHPRQFETPDSSQATPEEDLQPNPSKMLKIPQAADMDRAVEFWKDHLSGLNASAFPHLSSHLSMPHPDAKAEHRISYSSSAQQKMSSATICRTALAILLSRYTHSPEALFGIVTEQTPLLEEQLMLDGPTRTVVPIRVSCASEQSVSDIMSTIDSYDQTMRQFAHAGLRNIASAGDDESAACGFQTVLLVSDGDAQPASTWEILKKTEEPEGFIPCTNRALLLSCQMTSSGAHLTARYDQSIIDAEQMARLLRQLGHLIQNLQTSTDLPVEKVDMMTQEDWLEIERWNSDSIDAQDTLIHSEMLKWTSQSPNKAAVAAWDGEWTYAELDNVSSRLAQHINSIDLGKEHAIVPIYFEKSKWVVASMLAVLKAGHAFTLIDPSDPPARTAQVVQQTSATVALTSKLHRETVQSTVGRCIVVDEEFVKSLPQSSELSASVKAHDLAYVIFTSGSTGIPKGIMIEHRSFSSCAIKFGPALGITSDTRALQFGSHAFGACILEIMTTLIHGGCVCIPSDDDRMNNVLEFINRTNVNWVMATPSYMGTFQPEVVPGLKTLVLVGEQMSASVNEVWAPRVQLLNGYGQSESSSICCVAKISPGSSEPNNIGHAVGAHSWIVDPEDPNRLAPIGAVGELVIESAGIARDYIVAPTQDKSPFIKTAPTWYPAKQLPDGFKIYRTGDLACYASDGSIVCLGRMDSQVKIRGQRVELGAVETHLRQQMPDDMTIVVEAVKFSDSSSTTVLTAFLIGAGEKNSHILDQRATREINAKMEQVLPRHSIPAFYISMNNLPQTATGKVDRRKLRIMGSKILSQKTHSTPSQQSQAAISSGTDTETKLESIWITSLDLEPGSANMSATFFEMGGNSIIAIKMVNMARSNGIELKVSDIYQNPTLAGLKAIVIGTSLPYSLIPKVTRQGPVSEQSYAQNRMWFLDQLSEGASWYLIPFAVRMRGPVDVDALTRALLALEQRHETLRTTFENQDGVGVQIIHDRLSKELQVIDALDGDEGGLKTLYKVETTTFDITSEAGWSSTLIRLGKDDHILSIVMHHIISDGWSIDVLRRELIQLYAAALQGKDPSSALTPLPIQYSDFAVWQKQEAQAAEHERQLQYWKKQLADSSPAKIPTDFPRPDLLSGDAGVVPVAIDGELYQKLRGFCNKHNSTAFSILLAAFRAAHYRLTAVDDAVIGIPIANRNRWELENMIGFFVNTQCMRIAVDETDTFESLVRQVRSTTTAAFAHEDVPFERVVSALQPGHRDLSRTPLAQIMFAVHSQKDLGRFELEGIQSEPIASKAYTRFDVEFHLFQQADGLKGSCNFATDLFKPETIQNVVSVFFQILRHGLDQPETCISVLPLTDGVEELRRLDLLEIKRTNYPRDSSVVDVFREQAAANPEVIAVTDSSSRLTYAELDNKSELLSRWLRRRNLTPETLVSVLAPRSCETIVAYVGILKANLAYLPLDVRSPVTRMKDILSSVSGNTIVLMGSGVEDPGFDLPQLELVRITDTFDETIEDVQDSPQPSATSLAYVVFTSGSTGKPKGVMIEHRAIVRLVKSDNFPGFPSPARMSNVFNPAFDGAIWEINWMLLNGGTVVCIDYLTTLDGKELAAVFAKERVNAAFFAPAMLKLYLVDAREALKNLDFLIVGGERFDTKEAVEAMPLVRGKIANIYGPTEAGIISTCYNIPKDEAYTNGVPIGGSIYNSGAYVMDPNQQLVGLGVMGELVVTGDGVGRGYTNPELNKNRFIDITIEGKTFKAYRTGDRMRARVGDGLLEFFGRMDNQFKIRGNRIEAGEVESAMLSLKNVLNAAIVVRGGGEDEGPLEMVGFIVADDKNDTTEEEETGNQVEGWQDHFESGMYSDISTAVDQSAIGNDFKGWTSMYDGKDIDKGEMQEWLDDAIHTLHNGQIPRDVLEIGTGSGMILFNLNPGLNSYVGLDPSKSAVEFVNRAVESSPKFAGKAKVHVGMATDVNKLGEVHPDLVVFNSVVQYFPTPEYLAEVIDGLIAIPSVKRIFLGDIRSYATNGHFLAARAIHTLGTNNNATKDRVRQKIQELEDREEEFLVEPAFFTTLKERRPDVVKHVEIIPKNMKATNELSAYRYTAVVHLRDETDEPVYHIEKDSWVDFEAKQMDKTALLDHLRLSKDAMSVAVSNITYAHTAFERRIVESLDEDSKDDTKGTLDGAAWLSAVRSEAENRASLTVPDILEIAKEAGFRVEVSAARQWSQSGALDAVFHHFPPSSTDRTLIQFPTDNELRSSLTLANRPLQKLQRRRAALQVREKLQTLVPSYMVPPNIVVLDTMPLNTNGKIDRKELTRRARTLPKQQTAAPVPDFPISDIEITLCEEATEVFGMKVEISDHFFQLGGHSLLATKLISRIQHRLHVRVTVKDVFDSPVFADLAVIIRQGLAMQNPVAEGQDKQGWSSRVAPRTEVEKMLCEEFAAGLGVPVGITDNFFDLGGHSLMATKLAVRIGRRLDTAITVKDIFDYPVLFQLAKKLESSHSKSYEESGDDIQMADYTAFQLLDLEDPQDFVQSQIRPQLDSCYGTIQDVYPSTQMQKAFLFDPTTGEPRGLVPFYIDFPSNADAETLTKAIGALVDKLDMFRTVFLEAAGDLYQVVVEHLNLPIETIETEKNVNTATGDYLDVHGKDPVRLGHPCIQFAILKTASSVRVLLRMSHALYDGLSFEYIVRGLHVLYSGRNLPPPTQFARYMQYAAHSREEGYPFWREVLQNAPMTVLHDTNNGMSEQEMPASKAVHLSEVVNVPAQAIRNSTNTQATVFNTACALVLAKESGSQDVVFGRIVSGRQGLPVVWQDIIGPCTNAVPVHARVDDGNPQRIIRDLRDQYLRTLPFESLGFEEIKRNCTDWPEELTNFSVCVTYHNFEYHPESEVDNQKVEMGVLAKYVELSENEPLYDLAIAGEVEADGVNLKVTVVAKARLYNEARIRHVLEEVCKTFNGLNEAL.

Positions 53 to 466 (ADDKQRAVGH…VEKVDMMTQE (414 aa)) are condensation 1. The disordered stretch occupies residues 186–212 (NDEHPRQFETPDSSQATPEEDLQPNPS). Residues 495-887 (SQSPNKAAVA…GRMDSQVKIR (393 aa)) are adenylation 1. A disordered region spans residues 994 to 1013 (SQKTHSTPSQQSQAAISSGT). One can recognise a Carrier 1 domain in the interval 1010 to 1086 (SSGTDTETKL…GLKAIVIGTS (77 aa)). Ser1047 is modified (O-(pantetheine 4'-phosphoryl)serine). Residues 1105-1534 (SYAQNRMWFL…ETCISVLPLT (430 aa)) form a condensation 2 region. The tract at residues 1563–1960 (FREQAAANPE…GRMDNQFKIR (398 aa)) is adenylation 2. The S-adenosyl-L-methionine-dependent N-methyltransferase stretch occupies residues 2021 to 2177 (EGWQDHFESG…YLAEVIDGLI (157 aa)). Carrier domains are found at residues 2504–2578 (FPIS…RQGL) and 2598–2672 (APRT…ESSH). O-(pantetheine 4'-phosphoryl)serine is present on residues Ser2538 and Ser2632. Residues 2719–3124 (QDVYPSTQMQ…RHVLEEVCKT (406 aa)) are condensation 3.

This sequence belongs to the NRP synthetase family. The cofactor is pantetheine 4'-phosphate.

It participates in antibiotic biosynthesis; enniatin biosynthesis. Nonribosomal peptide synthetase that synthesizes enniatin by coupling three D-hydroxycarboxylic acids and three L-amino acids via amide and ester bonds in an alternating fashion. Whereas ESYN1 can accept different amino acids as precursors (L-valine, L-isoleucine or L-leucine), only one species of D-hydroxycarboxylic acid can be found in natural enniatin isolates (D-hydroxyisovaleric acid, D-Hiv). D-Hiv stems from L-valine deanimation by a valine aminotransferase to 2-keto-isovaleric acid (2-Kiv), which becomes subsequently reduced by a keto-isovaleric acid reductase (KivR) to D-Hiv. The polypeptide is Enniatin synthetase (Fusarium oxysporum (Fusarium vascular wilt)).